Here is a 445-residue protein sequence, read N- to C-terminus: Homoserine dehydrogenase (445 aa).

Positions 26, 28, and 29 each coordinate NADPH. 2 residues coordinate NAD(+): Val29 and Ala58. Val29 serves as a coordination point for NADP(+). Position 119 (Lys119) interacts with NADPH. Lys119 is an NADP(+) binding site. Na(+) is bound by residues Glu143, Val146, Gly148, and Ile150. NADP(+)-binding residues include Gly201 and Glu204. Positions 204 and 215 each coordinate L-homoserine. The active-site Proton donor is the Lys219. Gly321 contacts NADPH. Gly321 lines the NAD(+) pocket. Gly321 provides a ligand contact to NADP(+). An ACT domain is found at His368–Asp445.

It belongs to the homoserine dehydrogenase family. The cofactor is a metal cation.

The catalysed reaction is L-homoserine + NADP(+) = L-aspartate 4-semialdehyde + NADPH + H(+). The enzyme catalyses L-homoserine + NAD(+) = L-aspartate 4-semialdehyde + NADH + H(+). The protein operates within amino-acid biosynthesis; L-methionine biosynthesis via de novo pathway; L-homoserine from L-aspartate: step 3/3. It participates in amino-acid biosynthesis; L-threonine biosynthesis; L-threonine from L-aspartate: step 3/5. With respect to regulation, feedback inhibition by threonine. Its function is as follows. Catalyzes the conversion of L-aspartate-beta-semialdehyde (L-Asa) to L-homoserine (L-Hse), the third step in the biosynthesis of threonine and methionine from aspartate. The protein is Homoserine dehydrogenase (hom) of Corynebacterium glutamicum (strain ATCC 13032 / DSM 20300 / JCM 1318 / BCRC 11384 / CCUG 27702 / LMG 3730 / NBRC 12168 / NCIMB 10025 / NRRL B-2784 / 534).